The following is a 617-amino-acid chain: Putative metal ion transporter C17A12.14 (617 aa).

Residues M1 to P141 form a disordered region. S105 carries the post-translational modification Phosphoserine. Residues S117–R136 show a composition bias toward basic and acidic residues. A phosphoserine mark is found at S152, S162, S226, and S241. 2 helical membrane-spanning segments follow: residues T560–V580 and L590–L610.

It belongs to the CorA metal ion transporter (MIT) (TC 1.A.35) family. As to quaternary structure, interacts with sad1.

It localises to the membrane. The chain is Putative metal ion transporter C17A12.14 from Schizosaccharomyces pombe (strain 972 / ATCC 24843) (Fission yeast).